The following is a 355-amino-acid chain: RNA 3'-terminal phosphate cyclase (355 aa).

Residues Q100 and 300–304 (HLADQ) contribute to the ATP site. Catalysis depends on H325, which acts as the Tele-AMP-histidine intermediate.

The protein belongs to the RNA 3'-terminal cyclase family. Type 1 subfamily.

The protein resides in the cytoplasm. The enzyme catalyses a 3'-end 3'-phospho-ribonucleotide-RNA + ATP = a 3'-end 2',3'-cyclophospho-ribonucleotide-RNA + AMP + diphosphate. Functionally, catalyzes the conversion of 3'-phosphate to a 2',3'-cyclic phosphodiester at the end of RNA. The mechanism of action of the enzyme occurs in 3 steps: (A) adenylation of the enzyme by ATP; (B) transfer of adenylate to an RNA-N3'P to produce RNA-N3'PP5'A; (C) and attack of the adjacent 2'-hydroxyl on the 3'-phosphorus in the diester linkage to produce the cyclic end product. The biological role of this enzyme is unknown but it is likely to function in some aspects of cellular RNA processing. The chain is RNA 3'-terminal phosphate cyclase from Methanosarcina acetivorans (strain ATCC 35395 / DSM 2834 / JCM 12185 / C2A).